The sequence spans 363 residues: dTDP-L-rhamnose 4-epimerase (363 aa).

NAD(+) is bound by residues 18–24 (GGAGFIG), 68–69 (DV), and 90–94 (LAAET). Ser136 and Tyr191 together coordinate substrate. Residues Tyr191 and Lys195 each contribute to the NAD(+) site. Catalysis depends on Tyr191, which acts as the Proton acceptor. Asn220 and Arg259 together coordinate substrate.

Belongs to the NAD(P)-dependent epimerase/dehydratase family. Requires NAD(+) as cofactor.

It catalyses the reaction dTDP-6-deoxy-beta-L-talose = dTDP-beta-L-rhamnose. The protein operates within bacterial outer membrane biogenesis; LPS O-antigen biosynthesis. Catalyzes the interconvertion of dTDP-6-deoxy-L-talose and dTDP-L-rhamnose. The equilibrium is strongly toward dTDP-L-rhamnose. This chain is dTDP-L-rhamnose 4-epimerase (wbiB), found in Burkholderia thailandensis (strain ATCC 700388 / DSM 13276 / CCUG 48851 / CIP 106301 / E264).